We begin with the raw amino-acid sequence, 142 residues long: MATQAVQVFGKKKNATAVARCVQGKGLIKVNGVPLKLYAPEILRAKLYEPILLLGTDKFAEVDIRLKVSGGGHVSQVYAVRQAIAKAIVAYYAKYVDEHSKNTLKTALIQFDRTLLVADPRRCEPKKFGGKGARSRFQKSYR.

The protein belongs to the universal ribosomal protein uS9 family. In terms of assembly, component of the small ribosomal subunit (SSU). Mature N.crassa ribosomes consist of a small (40S) and a large (60S) subunit. The 40S small subunit contains 1 molecule of ribosomal RNA (18S rRNA) and at least 32 different proteins. The large 60S subunit contains 3 rRNA molecules (26S, 5.8S and 5S rRNA) and at least 42 different proteins.

It localises to the cytoplasm. Its function is as follows. Component of the ribosome, a large ribonucleoprotein complex responsible for the synthesis of proteins in the cell. The small ribosomal subunit (SSU) binds messenger RNAs (mRNAs) and translates the encoded message by selecting cognate aminoacyl-transfer RNA (tRNA) molecules. The large subunit (LSU) contains the ribosomal catalytic site termed the peptidyl transferase center (PTC), which catalyzes the formation of peptide bonds, thereby polymerizing the amino acids delivered by tRNAs into a polypeptide chain. The nascent polypeptides leave the ribosome through a tunnel in the LSU and interact with protein factors that function in enzymatic processing, targeting, and the membrane insertion of nascent chains at the exit of the ribosomal tunnel. This is Small ribosomal subunit protein uS9 (rps-16) from Neurospora crassa (strain ATCC 24698 / 74-OR23-1A / CBS 708.71 / DSM 1257 / FGSC 987).